A 726-amino-acid chain; its full sequence is Sister chromatid cohesion protein SCC4 (726 aa).

TPR repeat units follow at residues 7–40, 88–121, 132–165, 229–262, 443–477, 531–564, and 572–605; these read AEGL…QISF, FQNY…ASSV, CNFN…ASHI, RLRL…IQQL, PTIL…CIEA, ASIL…AHNH, and AQYL…AKKL. The interval 697 to 726 is disordered; it reads SVGIEGPSPAPSSSRLVGLDTGKRWGKRRM.

Belongs to the SCC4/mau-2 family. In terms of assembly, interacts with SCC2 to form the cohesin loading complex. As to expression, expressed ubiquitously.

It is found in the nucleus. It localises to the cytoplasm. Functionally, essential protein required for cell fate determination during embryogenesis. Involved in sister chromatid cohesion. Forms a complex with SCC2, which is required for the association of the cohesin complex with chromosomes. This is Sister chromatid cohesion protein SCC4 from Arabidopsis thaliana (Mouse-ear cress).